A 367-amino-acid chain; its full sequence is Biotin synthase (367 aa).

The region spanning asparagine 67 to serine 291 is the Radical SAM core domain. [4Fe-4S] cluster is bound by residues cysteine 82, cysteine 86, and cysteine 89. Residues cysteine 128, cysteine 159, cysteine 219, and arginine 295 each contribute to the [2Fe-2S] cluster site.

This sequence belongs to the radical SAM superfamily. Biotin synthase family. As to quaternary structure, homodimer. [4Fe-4S] cluster is required as a cofactor. It depends on [2Fe-2S] cluster as a cofactor.

It carries out the reaction (4R,5S)-dethiobiotin + (sulfur carrier)-SH + 2 reduced [2Fe-2S]-[ferredoxin] + 2 S-adenosyl-L-methionine = (sulfur carrier)-H + biotin + 2 5'-deoxyadenosine + 2 L-methionine + 2 oxidized [2Fe-2S]-[ferredoxin]. Its pathway is cofactor biosynthesis; biotin biosynthesis; biotin from 7,8-diaminononanoate: step 2/2. In terms of biological role, catalyzes the conversion of dethiobiotin (DTB) to biotin by the insertion of a sulfur atom into dethiobiotin via a radical-based mechanism. This is Biotin synthase from Psychrobacter sp. (strain PRwf-1).